A 361-amino-acid chain; its full sequence is tRNA(Ile)-lysidine synthase (361 aa).

32 to 37 (SGGPDS) contributes to the ATP binding site.

This sequence belongs to the tRNA(Ile)-lysidine synthase family.

It is found in the cytoplasm. It carries out the reaction cytidine(34) in tRNA(Ile2) + L-lysine + ATP = lysidine(34) in tRNA(Ile2) + AMP + diphosphate + H(+). Its function is as follows. Ligates lysine onto the cytidine present at position 34 of the AUA codon-specific tRNA(Ile) that contains the anticodon CAU, in an ATP-dependent manner. Cytidine is converted to lysidine, thus changing the amino acid specificity of the tRNA from methionine to isoleucine. The protein is tRNA(Ile)-lysidine synthase of Bradyrhizobium diazoefficiens (strain JCM 10833 / BCRC 13528 / IAM 13628 / NBRC 14792 / USDA 110).